A 157-amino-acid chain; its full sequence is Small ribosomal subunit protein uS17 (157 aa).

Belongs to the universal ribosomal protein uS17 family.

This chain is Small ribosomal subunit protein uS17 (RPS11), found in Dunaliella tertiolecta (Green alga).